The primary structure comprises 207 residues: Large ribosomal subunit protein uL4 (207 aa).

The tract at residues arginine 45–isoleucine 78 is disordered. The segment covering glycine 60–glycine 71 has biased composition (basic residues).

This sequence belongs to the universal ribosomal protein uL4 family. Part of the 50S ribosomal subunit.

One of the primary rRNA binding proteins, this protein initially binds near the 5'-end of the 23S rRNA. It is important during the early stages of 50S assembly. It makes multiple contacts with different domains of the 23S rRNA in the assembled 50S subunit and ribosome. Its function is as follows. Forms part of the polypeptide exit tunnel. The protein is Large ribosomal subunit protein uL4 of Pediococcus pentosaceus (strain ATCC 25745 / CCUG 21536 / LMG 10740 / 183-1w).